The sequence spans 122 residues: Large ribosomal subunit protein uL14c (122 aa).

It belongs to the universal ribosomal protein uL14 family. Part of the 50S ribosomal subunit.

Its subcellular location is the plastid. It is found in the chloroplast. Binds to 23S rRNA. The polypeptide is Large ribosomal subunit protein uL14c (Coffea arabica (Arabian coffee)).